Reading from the N-terminus, the 190-residue chain is ATP synthase subunit b, chloroplastic (190 aa).

The helical transmembrane segment at 35–55 (LSVVLGVLIFFGKGVCASCLL) threads the bilayer.

Belongs to the ATPase B chain family. In terms of assembly, F-type ATPases have 2 components, F(1) - the catalytic core - and F(0) - the membrane proton channel. F(1) has five subunits: alpha(3), beta(3), gamma(1), delta(1), epsilon(1). F(0) has four main subunits: a(1), b(1), b'(1) and c(10-14). The alpha and beta chains form an alternating ring which encloses part of the gamma chain. F(1) is attached to F(0) by a central stalk formed by the gamma and epsilon chains, while a peripheral stalk is formed by the delta, b and b' chains.

The protein resides in the plastid. Its subcellular location is the chloroplast thylakoid membrane. F(1)F(0) ATP synthase produces ATP from ADP in the presence of a proton or sodium gradient. F-type ATPases consist of two structural domains, F(1) containing the extramembraneous catalytic core and F(0) containing the membrane proton channel, linked together by a central stalk and a peripheral stalk. During catalysis, ATP synthesis in the catalytic domain of F(1) is coupled via a rotary mechanism of the central stalk subunits to proton translocation. In terms of biological role, component of the F(0) channel, it forms part of the peripheral stalk, linking F(1) to F(0). This is ATP synthase subunit b, chloroplastic from Coffea arabica (Arabian coffee).